The primary structure comprises 73 residues: Large ribosomal subunit protein bL28 (73 aa).

The protein belongs to the bacterial ribosomal protein bL28 family.

In Fervidobacterium nodosum (strain ATCC 35602 / DSM 5306 / Rt17-B1), this protein is Large ribosomal subunit protein bL28.